We begin with the raw amino-acid sequence, 156 residues long: Small ribosomal subunit protein uS7 (156 aa).

This sequence belongs to the universal ribosomal protein uS7 family. Part of the 30S ribosomal subunit. Contacts proteins S9 and S11.

One of the primary rRNA binding proteins, it binds directly to 16S rRNA where it nucleates assembly of the head domain of the 30S subunit. Is located at the subunit interface close to the decoding center, probably blocks exit of the E-site tRNA. The chain is Small ribosomal subunit protein uS7 from Brevibacillus brevis (strain 47 / JCM 6285 / NBRC 100599).